A 264-amino-acid chain; its full sequence is 1-(5-phosphoribosyl)-5-[(5-phosphoribosylamino)methylideneamino] imidazole-4-carboxamide isomerase (264 aa).

It belongs to the HisA/HisF family.

The protein resides in the cytoplasm. The catalysed reaction is 1-(5-phospho-beta-D-ribosyl)-5-[(5-phospho-beta-D-ribosylamino)methylideneamino]imidazole-4-carboxamide = 5-[(5-phospho-1-deoxy-D-ribulos-1-ylimino)methylamino]-1-(5-phospho-beta-D-ribosyl)imidazole-4-carboxamide. The protein operates within amino-acid biosynthesis; L-histidine biosynthesis; L-histidine from 5-phospho-alpha-D-ribose 1-diphosphate: step 4/9. The sequence is that of 1-(5-phosphoribosyl)-5-[(5-phosphoribosylamino)methylideneamino] imidazole-4-carboxamide isomerase (HIS6) from Yarrowia lipolytica (strain CLIB 122 / E 150) (Yeast).